The primary structure comprises 196 residues: Protein kinase OspG (196 aa).

This sequence belongs to the protein kinase superfamily. In terms of processing, autophosphorylated.

Its subcellular location is the secreted. The protein resides in the host cell. Its function is as follows. Effector proteins function to alter host cell physiology and promote bacterial survival in host tissues. This protein is a kinase that is involved in down-regulation of the host innate response induced by invasive bacteria. The sequence is that of Protein kinase OspG (ospG) from Shigella flexneri serotype X (strain 2002017).